The chain runs to 281 residues: Large ribosomal subunit protein uL2 (281 aa).

Disordered regions lie at residues 1–23 (MAVKHYKPVTNGRRNMSSLDYSK) and 224–281 (RGSV…KDSK). Residues 12 to 23 (GRRNMSSLDYSK) are compositionally biased toward polar residues. The span at 261 to 281 (KTRKTKKSSTKLILRRRKDSK) shows a compositional bias: basic residues.

Belongs to the universal ribosomal protein uL2 family. As to quaternary structure, part of the 50S ribosomal subunit. Forms a bridge to the 30S subunit in the 70S ribosome.

One of the primary rRNA binding proteins. Required for association of the 30S and 50S subunits to form the 70S ribosome, for tRNA binding and peptide bond formation. It has been suggested to have peptidyltransferase activity; this is somewhat controversial. Makes several contacts with the 16S rRNA in the 70S ribosome. The polypeptide is Large ribosomal subunit protein uL2 (Mycoplasmopsis agalactiae (strain NCTC 10123 / CIP 59.7 / PG2) (Mycoplasma agalactiae)).